Here is a 130-residue protein sequence, read N- to C-terminus: Small ribosomal subunit protein uS11 (130 aa).

It belongs to the universal ribosomal protein uS11 family. As to quaternary structure, part of the 30S ribosomal subunit. Interacts with proteins S7 and S18. Binds to IF-3.

Located on the platform of the 30S subunit, it bridges several disparate RNA helices of the 16S rRNA. Forms part of the Shine-Dalgarno cleft in the 70S ribosome. The polypeptide is Small ribosomal subunit protein uS11 (Syntrophomonas wolfei subsp. wolfei (strain DSM 2245B / Goettingen)).